The sequence spans 493 residues: Cysteine--tRNA ligase (493 aa).

C31 contacts Zn(2+). The 'HIGH' region motif lies at 33–43 (PTVYGDAHLGH). C226, H251, and E255 together coordinate Zn(2+). Positions 283–287 (KMGKS) match the 'KMSKS' region motif. K286 is a binding site for ATP.

It belongs to the class-I aminoacyl-tRNA synthetase family. In terms of assembly, monomer. Requires Zn(2+) as cofactor.

It localises to the cytoplasm. The enzyme catalyses tRNA(Cys) + L-cysteine + ATP = L-cysteinyl-tRNA(Cys) + AMP + diphosphate. The sequence is that of Cysteine--tRNA ligase from Bacteroides thetaiotaomicron (strain ATCC 29148 / DSM 2079 / JCM 5827 / CCUG 10774 / NCTC 10582 / VPI-5482 / E50).